The following is a 219-amino-acid chain: Large ribosomal subunit protein uL4c (219 aa).

The segment at 53 to 81 is disordered; sequence REHTASTKTKSQVRGGGKKPWKQKGTGRA. The segment covering 68–79 has biased composition (basic residues); that stretch reads GGKKPWKQKGTG.

This sequence belongs to the universal ribosomal protein uL4 family. In terms of assembly, part of the 50S ribosomal subunit.

The protein localises to the plastid. It is found in the chloroplast. Probably binds the 23S rRNA. The protein is Large ribosomal subunit protein uL4c (rpl4) of Cyanidium caldarium (Red alga).